A 33-amino-acid polypeptide reads, in one-letter code: Cytochrome b6-f complex subunit 8 (33 aa).

Residues 2 to 22 (LFTLGWASLAAMFSFSIAMVV) form a helical membrane-spanning segment.

The protein belongs to the PetN family. In terms of assembly, the 4 large subunits of the cytochrome b6-f complex are cytochrome b6, subunit IV (17 kDa polypeptide, PetD), cytochrome f and the Rieske protein, while the 4 small subunits are PetG, PetL, PetM and PetN. The complex functions as a dimer.

Its subcellular location is the cellular thylakoid membrane. Functionally, component of the cytochrome b6-f complex, which mediates electron transfer between photosystem II (PSII) and photosystem I (PSI), cyclic electron flow around PSI, and state transitions. In Synechococcus sp. (strain CC9605), this protein is Cytochrome b6-f complex subunit 8.